A 508-amino-acid chain; its full sequence is Cell death protein 3 (508 aa).

A propeptide spanning residues 1–223 (MMRQDRRNLL…FHEEDMNYVD (223 aa)) is cleaved from the precursor. The CARD domain occupies 2–91 (MRQDRRNLLE…HELAAVLEPL (90 aa)). 2 disordered regions span residues 106-130 (PMSPASHRRSRALSPSTFSSPTRVH) and 148-184 (YTRARSTSRSSRPLHASDRHNYVSPSNSFQSQPSSAN). The segment covering 118–127 (LSPSTFSSPT) has biased composition (polar residues). Over residues 171-184 (SPSNSFQSQPSSAN) the composition is skewed to low complexity. Active-site residues include histidine 317 and cysteine 360. The segment at 392–407 (GPLFNFLGCVRPQAQQ) is required for interaction with ced-4.

The protein belongs to the peptidase C14A family. The active form is probably a heterodimer of the p17 subunit with either the p15 or p13 subunit which are all derived from the precursor by autocatalysis. Interacts with octameric ced-4 (two ced-3 zymogens per one ced-4 octamer); the interaction causes the autoproteolytic cleavage and activation of ced-3. Processed ced-3 also interacts with ced-4 octamer to form a stable holoenzyme. Interacts (via large subunit p17) with csp-3; the interaction prevents ced-3 autoactivation and delays ced-4-induced ced-3 processing. Interacts (via large subunit p17 or small subunit p13 or p15) with csp-2; the interaction inhibits ced-3 autoactivation. Interacts (via propeptide) with nucleoporin npp-14; the interaction tethers ced-3 to the nuclear membrane and prevents its autoprocessing in absence of ced-4. Interacts with dct-1. May form a complex composed of ced-3, ced-4 and mac-1. Post-translationally, autocatalytic cleavage removes the propeptide and generates the catalytic subunit p17 and two non-catalytic subunits p15 and p13; autoproteolysis is induced by ced-4 oligomer. Cleaved by caspase csp-1 probably at Asp-146 and Asp-376.

Its subcellular location is the nucleus membrane. The protein localises to the perikaryon. It is found in the synapse. The protein resides in the mitochondrion. It localises to the cytoplasm. Its subcellular location is the perinuclear region. It catalyses the reaction Strict requirement for an Asp residue at position P1 and has a preferred cleavage sequence of Asp-Glu-Val-Asp-|-.. With respect to regulation, octameric ced-4 activates zymogen autoprocessing and enhances activity of processed ced-3. Zymogen autoactivation is inhibited by csp-3. csp-3 has no effect on active ced-3. Zymogen autoactivation is inhibited by csp-2. Inhibited by cysteine protease inhibitor iodoacetic acid (CH3COOI). Inhibited by benzyloxycarbonyl-DEVD-fluoro-methyl ketone (zDEVD-fmk). Inhibited by benzyloxycarbonyl-VAD-fluoro-methyl ketone (zVAD-fmk). Not inhibited by N-[N-(L-3-transcarboxirane-2-carbonyl)-leucyl]-agmatine (E-64) or by the serine and cysteine protease inhibitor L-1-chloro-3-[4-to-osylamido]-7-amino-2-heptanone (TLCK). Functionally, acts as a cysteine protease in controlling programmed cell death (apoptosis) by proteolytically activating or inactivating a wide range of substrates. Component of the egl-1, ced-9, ced-4 and ced-3 apoptotic signaling cascade required for the initiation of programmed cell death in cells fated to die during embryonic and postembryonic development. During oogenesis, required for germline apoptosis downstream of ced-9 and ced-4 but independently of egl-1. By cleaving and activating ced-8, promotes phosphatidylserine exposure on the surface of apoptotic cells; phosphatidylserine is a specific marker only present at the surface of apoptotic cells and acts as a specific signal for engulfment. By cleaving and converting dcr-1 into a deoxyribonuclease (DNase), promotes apoptotic chromosomal DNA fragmentation. By cleaving mitochondrial fission protein drp-1, may regulate the removal of mitochondria during apoptosis. During germline apoptosis, cleaves translation initiation factor ifg-1 (isoform p170) promoting cap-independent translation. During male tail morphogenesis, promotes apoptosis of the tail-spike cell downstream of ced-4 but independently of egl-1 and ced-9. By cleaving cnt-1, prevents the activation of the prosurvival akt-1/2 signaling pathway and thus promotes apoptosis. Downstream of ced-4, may play a role in sex-specific cell apoptosis by cleaving sex-determining protein fem-1. May regulate germline apoptosis in response to DNA damage, probably downstream of let-60/ras and mpk-1 pathway. Cleaves ced-9 in vitro. Cleaves csp-2 isoform b resulting in the removal of the propeptide and the generation of csp-2 subunit p31 in vitro. Independently of its apoptotic role has additional functions. Probably by cleaving and thereby activating actin-severing protein gsnl-1, required for the elimination of transient presynaptic components during larval development downstream of egl-1, ced-9 and ced-4 pathway. Together with ain-1, a component of the miRNA-induced-silencing complex (miRISC), regulates temporal cell fate patterning during larval development. Acts in cell fate patterning by cleaving heterochronic protein lin-28, likely promoting its degradation. Also cleaves heterochronic protein lin-14 and exonuclease disl-2 in vitro. Downstream of calreticulin crt-1 and ced-4 and independently of egl-1 and ced-9, plays a role in the initial steps of axonal regrowth following axotomy. Cleaves 14-3-3-like protein ftt-2, tubulin tbb-2 and calreticulin crt-1 in vitro. Plays also a role in resistance to S.typhimurium-mediated infection. This Caenorhabditis remanei (Caenorhabditis vulgaris) protein is Cell death protein 3.